Consider the following 275-residue polypeptide: Phosphate import ATP-binding protein PstB (275 aa).

The ABC transporter domain occupies 29–270 (VSVRDLNFYY…PTDRRTQDYI (242 aa)). 61 to 68 (GPSGCGKS) provides a ligand contact to ATP.

Belongs to the ABC transporter superfamily. Phosphate importer (TC 3.A.1.7) family. As to quaternary structure, the complex is composed of two ATP-binding proteins (PstB), two transmembrane proteins (PstC and PstA) and a solute-binding protein (PstS).

It localises to the cell inner membrane. The catalysed reaction is phosphate(out) + ATP + H2O = ADP + 2 phosphate(in) + H(+). Functionally, part of the ABC transporter complex PstSACB involved in phosphate import. Responsible for energy coupling to the transport system. The sequence is that of Phosphate import ATP-binding protein PstB from Rhodopseudomonas palustris (strain BisB18).